Reading from the N-terminus, the 63-residue chain is MKASELREKSVEELNAELLGLLREQFNLRMQHATGQLTQTNQLKLVRRNIARVKTIITSKAGA.

The protein belongs to the universal ribosomal protein uL29 family.

The protein is Large ribosomal subunit protein uL29 of Shewanella baltica (strain OS223).